The chain runs to 63 residues: Large ribosomal subunit protein uL30 (63 aa).

This sequence belongs to the universal ribosomal protein uL30 family. In terms of assembly, part of the 50S ribosomal subunit.

The protein is Large ribosomal subunit protein uL30 of Rickettsia prowazekii (strain Madrid E).